Here is a 250-residue protein sequence, read N- to C-terminus: Small ribosomal subunit protein uS3 (250 aa).

Residues 39 to 111 (IRQLINNFSK…DINLNILEVK (73 aa)) enclose the KH type-2 domain.

The protein belongs to the universal ribosomal protein uS3 family. Part of the 30S ribosomal subunit. Forms a tight complex with proteins S10 and S14.

Functionally, binds the lower part of the 30S subunit head. Binds mRNA in the 70S ribosome, positioning it for translation. This chain is Small ribosomal subunit protein uS3, found in Phytoplasma australiense.